The chain runs to 222 residues: Thiol:disulfide interchange protein DsbL (222 aa).

Positions 1–27 (MSKLGISSLFKTILLTAALAVSFTASA) are cleaved as a signal peptide. Residues 28–221 (FTEGTDYMVL…MADLIRELAS (194 aa)) enclose the Thioredoxin domain. Residues Cys-56 and Cys-59 are joined by a disulfide bond.

This sequence belongs to the thioredoxin family. DsbL subfamily. As to quaternary structure, interacts with DsbI.

The protein resides in the periplasm. Functionally, involved in disulfide-bond formation. Acts by transferring its disulfide bond to other proteins. Part of a redox system composed of DsbI and DsbL that mediates formation of an essential disulfide bond in AssT. The protein is Thiol:disulfide interchange protein DsbL of Escherichia coli O6:H1 (strain CFT073 / ATCC 700928 / UPEC).